Reading from the N-terminus, the 797-residue chain is Outer membrane protein assembly factor BamA (797 aa).

The signal sequence occupies residues 1 to 21; the sequence is MKLKQIASALMMLGISPLALA. POTRA domains are found at residues 23 to 90, 91 to 171, 174 to 262, 265 to 344, and 347 to 421; these read FTIQ…VIER, PTIG…IDEG, AKIT…VHEG, FRWG…IEPG, and IYVN…LTER.

It belongs to the BamA family. As to quaternary structure, part of the Bam complex.

The protein resides in the cell outer membrane. In terms of biological role, part of the outer membrane protein assembly complex, which is involved in assembly and insertion of beta-barrel proteins into the outer membrane. This chain is Outer membrane protein assembly factor BamA, found in Neisseria meningitidis serogroup B (strain ATCC BAA-335 / MC58).